A 523-amino-acid chain; its full sequence is MASTAVMMDVDSSGVNDLHHSEKKYAEEDQVQELLKVLNEISKTTLTLDPRYIWRSLKDLSSLRNQELLNAETLCFTVNVLYPDSSSFKKNLLKFITSNHKSSVPGSAELRNSYPASFYSVNTEKKTIEVTAEINCFMHLLVQLFLWDSKELEQLVEFNRKVVIPNLLCYYNLRSLNLINAKLWFYIYLSHETLARSSEEINSDNQNIILRSTMMKFLKIASLKHDNETKAMLINLILRDFLNNGEVDSASDFISKLEYPHTDVSSSLEARYFFYLSKINAIQLDYSTANEYIIAAIRKAPHNSKSLGFLQQSNKLHCCIQLLMGDIPELSFFHQSNMQKSLLPYYHLTKAVKLGDLKKFTSTITKYKQLLLKDDTYQLCVRLRSNVIKTGIRIISLTYKKISLRDICLKLNLDSEQTVEYMVSRAIRDGVIEAKINHEDGFIETTELLNIYDSEDPQQVFDERIKFANQLHDEYLVSMRYPEDKKTQQNEKSENGENDDDTLDGDLMDDMSDISDLDDLGFL.

A2 carries the post-translational modification N-acetylalanine. The region spanning 270–450 (ARYFFYLSKI…GFIETTELLN (181 aa)) is the PCI domain. A Phosphoserine modification is found at S454. Over residues 480-495 (RYPEDKKTQQNEKSEN) the composition is skewed to basic and acidic residues. The segment at 480 to 523 (RYPEDKKTQQNEKSENGENDDDTLDGDLMDDMSDISDLDDLGFL) is disordered. Over residues 496 to 523 (GENDDDTLDGDLMDDMSDISDLDDLGFL) the composition is skewed to acidic residues.

It belongs to the proteasome subunit S3 family. The 26S proteasome is composed of a core protease, known as the 20S proteasome, capped at one or both ends by the 19S regulatory complex (RC). The RC is composed of at least 18 different subunits in two subcomplexes, the base and the lid, which form the portions proximal and distal to the 20S proteolytic core, respectively. In terms of processing, N-acetylated by NAT1.

Acts as a regulatory subunit of the 26S proteasome which is involved in the ATP-dependent degradation of ubiquitinated proteins. The protein is 26S proteasome regulatory subunit RPN3 (RPN3) of Saccharomyces cerevisiae (strain ATCC 204508 / S288c) (Baker's yeast).